Here is a 335-residue protein sequence, read N- to C-terminus: Succinylglutamate desuccinylase (335 aa).

Zn(2+) is bound by residues H59, E62, and H151. E215 is a catalytic residue.

This sequence belongs to the AspA/AstE family. Succinylglutamate desuccinylase subfamily. It depends on Zn(2+) as a cofactor.

It catalyses the reaction N-succinyl-L-glutamate + H2O = L-glutamate + succinate. The protein operates within amino-acid degradation; L-arginine degradation via AST pathway; L-glutamate and succinate from L-arginine: step 5/5. Transforms N(2)-succinylglutamate into succinate and glutamate. This Pseudomonas putida (strain GB-1) protein is Succinylglutamate desuccinylase.